A 226-amino-acid polypeptide reads, in one-letter code: Ornithine decarboxylase antizyme (226 aa).

Belongs to the ODC antizyme family. In terms of assembly, interacts with ODC and thereby sterically blocks ODC homodimerization.

Ornithine decarboxylase (ODC) antizyme protein that negatively regulates ODC activity and intracellular polyamine biosynthesis in response to increased intracellular polyamine levels. Binds to ODC monomers, inhibiting the assembly of the functional ODC homodimer, and targets the monomers for ubiquitin-independent proteolytic destruction by the 26S proteasome. This is Ornithine decarboxylase antizyme (spa1) from Schizosaccharomyces japonicus (Fission yeast).